Reading from the N-terminus, the 316-residue chain is Putative S-adenosyl-L-methionine-dependent methyltransferase MAB_4606c (316 aa).

Residues D137 and 166-167 (DL) contribute to the S-adenosyl-L-methionine site.

It belongs to the UPF0677 family.

In terms of biological role, exhibits S-adenosyl-L-methionine-dependent methyltransferase activity. The chain is Putative S-adenosyl-L-methionine-dependent methyltransferase MAB_4606c from Mycobacteroides abscessus (strain ATCC 19977 / DSM 44196 / CCUG 20993 / CIP 104536 / JCM 13569 / NCTC 13031 / TMC 1543 / L948) (Mycobacterium abscessus).